The sequence spans 212 residues: Large ribosomal subunit protein uL1 (212 aa).

The protein belongs to the universal ribosomal protein uL1 family. In terms of assembly, part of the 50S ribosomal subunit.

In terms of biological role, binds directly to 23S rRNA. Probably involved in E site tRNA release. Functionally, protein L1 is also a translational repressor protein, it controls the translation of its operon by binding to its mRNA. This Methanosphaera stadtmanae (strain ATCC 43021 / DSM 3091 / JCM 11832 / MCB-3) protein is Large ribosomal subunit protein uL1.